Reading from the N-terminus, the 107-residue chain is Integration host factor subunit alpha (107 aa).

It belongs to the bacterial histone-like protein family. As to quaternary structure, heterodimer of an alpha and a beta chain.

This protein is one of the two subunits of integration host factor, a specific DNA-binding protein that functions in genetic recombination as well as in transcriptional and translational control. The protein is Integration host factor subunit alpha of Brucella suis (strain ATCC 23445 / NCTC 10510).